Here is a 135-residue protein sequence, read N- to C-terminus: Endoribonuclease YbeY (135 aa).

Zn(2+)-binding residues include His-94, His-98, and His-104.

The protein belongs to the endoribonuclease YbeY family. The cofactor is Zn(2+).

Its subcellular location is the cytoplasm. Its function is as follows. Single strand-specific metallo-endoribonuclease involved in late-stage 70S ribosome quality control and in maturation of the 3' terminus of the 16S rRNA. The sequence is that of Endoribonuclease YbeY from Campylobacter jejuni subsp. jejuni serotype O:2 (strain ATCC 700819 / NCTC 11168).